A 286-amino-acid polypeptide reads, in one-letter code: E3 ubiquitin-protein ligase RNF170 (286 aa).

Over 1–52 (MQRYWRFQDNKIQDICFGVLGESWIQRPVMARYYSEGQSLQQDDSFIEGVSD) the chain is Lumenal. The chain crosses the membrane as a helical span at residues 53-73 (QVLVAVVVSLALTATLLYALL). Residues 74 to 229 (RNVQQNIHPE…GGLFWMFRIR (156 aa)) lie on the Cytoplasmic side of the membrane. An RING-type zinc finger spans residues 115-158 (CPICLHQASFPVETNCGHLFCGSCIIAYWRYGSWLGAISCPICR). A helical membrane pass occupies residues 230–250 (IMLCLMGAFFYLISPLDFVPE). Ala-251 is a topological domain (lumenal). A helical transmembrane segment spans residues 252–272 (LFGILGFLDDFFVIFLLLIYI). The Cytoplasmic segment spans residues 273 to 286 (SIMYREVITQRLTR).

As to quaternary structure, constitutively associated with the ERLIN1/ERLIN 2 complex. Interacts with activated ITPR1.

It is found in the endoplasmic reticulum membrane. It carries out the reaction S-ubiquitinyl-[E2 ubiquitin-conjugating enzyme]-L-cysteine + [acceptor protein]-L-lysine = [E2 ubiquitin-conjugating enzyme]-L-cysteine + N(6)-ubiquitinyl-[acceptor protein]-L-lysine.. The protein operates within protein modification; protein ubiquitination. Functionally, E3 ubiquitin-protein ligase that plays an essential role in stimulus-induced inositol 1,4,5-trisphosphate receptor type 1 (ITPR1) ubiquitination and degradation via the endoplasmic reticulum-associated degradation (ERAD) pathway. Also involved in ITPR1 turnover in resting cells. Selectively inhibits the TLR3-triggered innate immune response by promoting the 'Lys-48'-linked polyubiquitination and degradation of TLR3. In Mus musculus (Mouse), this protein is E3 ubiquitin-protein ligase RNF170 (Rnf170).